The primary structure comprises 64 residues: Large ribosomal subunit protein bL35 (64 aa).

2 stretches are compositionally biased toward basic residues: residues Met-1–Arg-15 and Val-23–Arg-42. A disordered region spans residues Met-1–Asp-45.

The protein belongs to the bacterial ribosomal protein bL35 family.

In Mycolicibacterium vanbaalenii (strain DSM 7251 / JCM 13017 / BCRC 16820 / KCTC 9966 / NRRL B-24157 / PYR-1) (Mycobacterium vanbaalenii), this protein is Large ribosomal subunit protein bL35.